Reading from the N-terminus, the 385-residue chain is Queuine tRNA-ribosyltransferase (385 aa).

Aspartate 92 acts as the Proton acceptor in catalysis. Substrate-binding positions include 92–96, aspartate 146, glutamine 188, and glycine 215; that span reads DSGGF. The RNA binding stretch occupies residues 246–252; the sequence is GVGHPED. Aspartate 265 acts as the Nucleophile in catalysis. The tract at residues 270–274 is RNA binding; important for wobble base 34 recognition; the sequence is TRTGR. Residues cysteine 303, cysteine 305, cysteine 308, and histidine 334 each contribute to the Zn(2+) site.

It belongs to the queuine tRNA-ribosyltransferase family. Homodimer. Within each dimer, one monomer is responsible for RNA recognition and catalysis, while the other monomer binds to the replacement base PreQ1. It depends on Zn(2+) as a cofactor.

It carries out the reaction 7-aminomethyl-7-carbaguanine + guanosine(34) in tRNA = 7-aminomethyl-7-carbaguanosine(34) in tRNA + guanine. Its pathway is tRNA modification; tRNA-queuosine biosynthesis. Functionally, catalyzes the base-exchange of a guanine (G) residue with the queuine precursor 7-aminomethyl-7-deazaguanine (PreQ1) at position 34 (anticodon wobble position) in tRNAs with GU(N) anticodons (tRNA-Asp, -Asn, -His and -Tyr). Catalysis occurs through a double-displacement mechanism. The nucleophile active site attacks the C1' of nucleotide 34 to detach the guanine base from the RNA, forming a covalent enzyme-RNA intermediate. The proton acceptor active site deprotonates the incoming PreQ1, allowing a nucleophilic attack on the C1' of the ribose to form the product. After dissociation, two additional enzymatic reactions on the tRNA convert PreQ1 to queuine (Q), resulting in the hypermodified nucleoside queuosine (7-(((4,5-cis-dihydroxy-2-cyclopenten-1-yl)amino)methyl)-7-deazaguanosine). This is Queuine tRNA-ribosyltransferase from Thermus thermophilus (strain ATCC BAA-163 / DSM 7039 / HB27).